A 310-amino-acid chain; its full sequence is Protoheme IX farnesyltransferase (310 aa).

8 helical membrane-spanning segments follow: residues 31 to 51 (VIELLLVTAIPAMLLADRGSV), 53 to 73 (PLLILNTLIGGMLAAAGANTL), 102 to 122 (NALIFGLVLSVGSFFWLWGTS), 124 to 144 (LLSGLLAVATIAFYVFVYTLL), 149 to 169 (TSQNVVWGGAAGCMPVMIGWS), 170 to 190 (AVTGTIQWPALVMFAIIFFWT), 242 to 262 (LATGWLYASVAVLAGTWFLVM), and 289 to 309 (LAVVFAALAVDSVLALPTLLG).

Belongs to the UbiA prenyltransferase family. Protoheme IX farnesyltransferase subfamily.

The protein resides in the cell membrane. The catalysed reaction is heme b + (2E,6E)-farnesyl diphosphate + H2O = Fe(II)-heme o + diphosphate. The protein operates within porphyrin-containing compound metabolism; heme O biosynthesis; heme O from protoheme: step 1/1. Its function is as follows. Converts heme B (protoheme IX) to heme O by substitution of the vinyl group on carbon 2 of heme B porphyrin ring with a hydroxyethyl farnesyl side group. The polypeptide is Protoheme IX farnesyltransferase (Mycobacterium sp. (strain JLS)).